A 712-amino-acid polypeptide reads, in one-letter code: Solute carrier organic anion transporter family member 1C1 (712 aa).

Over 1–43 (MDTSSKENIQLFCKTSVQPVGRPSFKTEYPSSEEKQPCCGELK) the chain is Cytoplasmic. The chain crosses the membrane as a helical span at residues 44–63 (VFLCALSFVYFAKALAEGYL). At 64–82 (KSTITQIERRFDIPSSLVG) the chain is on the extracellular side. Residues 83-103 (VIDGSFEIGNLLVITFVSYFG) form a helical membrane-spanning segment. Residues 104–109 (AKLHRP) are Cytoplasmic-facing. The chain crosses the membrane as a helical span at residues 110 to 134 (KIIGAGCVIMGVGTLLIAMPQFFME). The Extracellular portion of the chain corresponds to 135 to 184 (QYKYERYSPSSNSTLSISPCLLESSSQLPVSVMEKSKSKISNECEVDTSS). The N-linked (GlcNAc...) asparagine glycan is linked to Asn-146. A helical membrane pass occupies residues 185–213 (SMWIYVFLGNLLRGIGETPIQPLGIAYLD). At 214 to 232 (DFASEDNAAFYIGCVQTVA) the chain is on the cytoplasmic side. The chain crosses the membrane as a helical span at residues 233–253 (IIGPIFGFLLGSLCAKLYVDI). Topologically, residues 254 to 271 (GFVNLDHITITPKDPQWV) are extracellular. The chain crosses the membrane as a helical span at residues 272-296 (GAWWLGYLIAGIISLLAAVPFWYLP). The Cytoplasmic portion of the chain corresponds to 297–348 (KSLPRSQSREDSNSSSEKSKFIIDDHTDYQTPQGENAKIMEMARDFLPSLKN). Residues 349 to 370 (LFGNPVYFLYLCTSTVQFNSLF) traverse the membrane as a helical segment. Topologically, residues 371–390 (GMVTYKPKYIEQQYGQSSSR) are extracellular. Residues 391–414 (ANFVIGLINIPAVALGIFSGGIVM) form a helical membrane-spanning segment. Over 415 to 418 (KKFR) the chain is Cytoplasmic. The helical transmembrane segment at 419–442 (ISVCGAAKLYLGSSVFGYLLFLSL) threads the bilayer. Residues 443 to 554 (FALGCENSDV…NGCPQMFLYF (112 aa)) are Extracellular-facing. A Kazal-like domain is found at 470 to 525 (RALFSDCNSRCKCSETKWEPMCGENGITYVSACLAGCQTSNRSGKNIIFYNCTCVG). Disulfide bonds link Cys-476-Cys-506, Cys-482-Cys-502, and Cys-491-Cys-523. N-linked (GlcNAc...) asparagine glycans are attached at residues Asn-510, Asn-520, and Asn-533. Residues 555–577 (LVISVITSYTLSLGGIPGYILLL) traverse the membrane as a helical segment. Residues 578–586 (RCIKPQLKS) are Cytoplasmic-facing. A helical membrane pass occupies residues 587-612 (FALGIYTLAIRVLAGIPAPVYFGVLI). Residues 613 to 646 (DTSCLKWGFKRCGSRGSCRLYDSNVFRHIYLGLT) lie on the Extracellular side of the membrane. The chain crosses the membrane as a helical span at residues 647–664 (VILGTVSILLSIAVLFIL). At 665–712 (KKNYVSKHRSFITKRERTMVSTRFQKENYTTSDHLLQPNYWPGKETQL) the chain is on the cytoplasmic side.

Belongs to the organo anion transporter (TC 2.A.60) family. Highly expressed in brain and in Leydig cells in testis. Localized in nests of Leydig cells (at protein level). Expressed in choroid plexus (at protein level). Not strongly enriched in cerebral microvessels.

It localises to the cell membrane. It catalyses the reaction 3,3',5'-triiodo-L-thyronine(out) = 3,3',5'-triiodo-L-thyronine(in). It carries out the reaction L-thyroxine(out) = L-thyroxine(in). The catalysed reaction is L-thyroxine sulfate(out) = L-thyroxine sulfate(in). Mediates the Na(+)-independent high affinity transport of organic anions such as the thyroid hormones L-thyroxine (T4), L-thyroxine sulfate (T4S), and 3,3',5'-triiodo-L-thyronine (reverse T3, rT3) at the plasma membrane. Regulates T4 levels in different brain regions by transporting T4, and also by serving as an export pump for T4S, which is a source of T4 after hydrolysis by local sulfatases. Increases the access of these substrates to the intracellular sites where they are metabolized by the deiodinases. Other potential substrates, such as triiodothyronine (T3), 17-beta-glucuronosyl estradiol (17beta-estradiol 17-O-(beta-D-glucuronate)), estrone-3-sulfate (E1S) and sulfobromophthalein (BSP) are transported with much lower efficiency. Transports T4 and E1S in a pH-insensitive manner. Facilitates the transport of thyroid hormones across the blood-brain barrier and into glia and neuronal cells in the brain. In Homo sapiens (Human), this protein is Solute carrier organic anion transporter family member 1C1 (SLCO1C1).